A 418-amino-acid polypeptide reads, in one-letter code: Putative methylthiotransferase jhp_0270 (418 aa).

One can recognise an MTTase N-terminal domain in the interval 2–110 (KKVYFKTFGC…INALLQEKKR (109 aa)). [4Fe-4S] cluster is bound by residues cysteine 11, cysteine 45, cysteine 74, cysteine 144, cysteine 148, and cysteine 151. Residues 130–355 (FVGKTRAFIK…KDLIFHKNKA (226 aa)) enclose the Radical SAM core domain.

Belongs to the methylthiotransferase family. [4Fe-4S] cluster is required as a cofactor.

In Helicobacter pylori (strain J99 / ATCC 700824) (Campylobacter pylori J99), this protein is Putative methylthiotransferase jhp_0270.